We begin with the raw amino-acid sequence, 527 residues long: Serine/threonine-protein kinase NLK (527 aa).

2 sufficient for interaction with DAPK3 regions span residues 1–125 (MSLC…KAHH) and 124–416 (HHHQ…SKRI). 2 required for interaction with TAB2 regions span residues 1–304 (MSLC…VVTQ) and 434–527 (YHTC…LVWE). 2 disordered regions span residues 22–72 (AAAA…SSAA) and 90–140 (QQPY…DIEP). Over residues 26–54 (GHHHHHHHHLPHLPPPHLHHHHHPQHHLH) the composition is skewed to basic residues. The span at 103–119 (PGPAAAAPAQVQAAAAA) shows a compositional bias: low complexity. Residues 122-131 (KAHHHQHSHH) show a composition bias toward basic residues. The Protein kinase domain occupies 138–427 (IEPDRPIGYG…AKDALAHPYL (290 aa)). ATP-binding positions include 144-152 (IGYGAFGVV) and Lys-167. Asp-264 (proton acceptor) is an active-site residue. Thr-298 carries the phosphothreonine; by autocatalysis modification. The short motif at 298–300 (TQE) is the TQE element. The segment at 428–527 (DEGRLRYHTC…EMPPSPLVWE (100 aa)) is required for homodimerization and kinase activation and localization to the nucleus. Ser-522 is modified (phosphoserine).

Belongs to the protein kinase superfamily. CMGC Ser/Thr protein kinase family. MAP kinase subfamily. As to quaternary structure, homodimer. Homodimerization is required for intermolecular autophosphorylation, kinase activation and nuclear localization. May interact with components of cullin-RING-based SCF (SKP1-CUL1-F-box protein) E3 ubiquitin-protein ligase complexes. Interacts with LEF1, MEF2A, MYBL1 and MYBL2. Interacts with the upstream activating kinases HIPK2 and MAP3K7/TAK1. Interaction with MAP3K7/TAK1 seems to be indirect, and may be mediated by other proteins such as STAT3, TAB1 and TAB2. Interacts with and phosphorylates a number of transcription factors including FOXO1, FOXO3, FOXO4, MYB, NOTCH1 and TCF7L2/TCF4. Interacts with DAPK3/ZIPK, and this interaction may disrupt interaction with transcription factors such as TCF7L2/TCF4. Forms a transcriptional repressor complex with CHD7, PPARG and SETDB1. Interacts with RNF138/NARF. Interacts with ATF5; the interaction stabilizes ATF5 at the protein level in a kinase-independent manner. The cofactor is Mg(2+). Post-translationally, phosphorylated on Thr-298. Intermolecular autophosphorylation on Thr-298 activates the enzyme.

The protein resides in the nucleus. The protein localises to the cytoplasm. It catalyses the reaction L-seryl-[protein] + ATP = O-phospho-L-seryl-[protein] + ADP + H(+). It carries out the reaction L-threonyl-[protein] + ATP = O-phospho-L-threonyl-[protein] + ADP + H(+). Activated by the non-canonical Wnt signaling pathway, in which WNT5A leads to activation of MAP3K7/TAK1 and HIPK2, which subsequently phosphorylates and activates this protein. Activated by dimerization and subsequent intermolecular autophosphorylation on Thr-298. Other cytokines such as IL6 may also activate this regulatory circuit. Its function is as follows. Serine/threonine-protein kinase that regulates a number of transcription factors with key roles in cell fate determination. Positive effector of the non-canonical Wnt signaling pathway, acting downstream of WNT5A, MAP3K7/TAK1 and HIPK2. Negative regulator of the canonical Wnt/beta-catenin signaling pathway. Binds to and phosphorylates TCF7L2/TCF4 and LEF1, promoting the dissociation of the TCF7L2/LEF1/beta-catenin complex from DNA, as well as the ubiquitination and subsequent proteolysis of LEF1. Together these effects inhibit the transcriptional activation of canonical Wnt/beta-catenin target genes. Negative regulator of the Notch signaling pathway. Binds to and phosphorylates NOTCH1, thereby preventing the formation of a transcriptionally active ternary complex of NOTCH1, RBPJ/RBPSUH and MAML1. Negative regulator of the MYB family of transcription factors. Phosphorylation of MYB leads to its subsequent proteolysis while phosphorylation of MYBL1 and MYBL2 inhibits their interaction with the coactivator CREBBP. Other transcription factors may also be inhibited by direct phosphorylation of CREBBP itself. Acts downstream of IL6 and MAP3K7/TAK1 to phosphorylate STAT3, which is in turn required for activation of NLK by MAP3K7/TAK1. Upon IL1B stimulus, cooperates with ATF5 to activate the transactivation activity of C/EBP subfamily members. Phosphorylates ATF5 but also stabilizes ATF5 protein levels in a kinase-independent manner. Acts as an inhibitor of the mTORC1 complex in response to osmotic stress by mediating phosphorylation of RPTOR, thereby preventing recruitment of the mTORC1 complex to lysosomes. This is Serine/threonine-protein kinase NLK (NLK) from Canis lupus familiaris (Dog).